A 208-amino-acid polypeptide reads, in one-letter code: Endo-1,4-beta-xylanase B (208 aa).

The N-terminal stretch at 1 to 16 (MKVTAAFAGLLATTLA) is a signal peptide. Residues 17-207 (APATELVTRS…GTGTASVTVS (191 aa)) enclose the GH11 domain. Catalysis depends on E101, which acts as the Nucleophile. Residue E194 is the Proton donor of the active site.

The protein belongs to the glycosyl hydrolase 11 (cellulase G) family.

The protein localises to the secreted. The catalysed reaction is Endohydrolysis of (1-&gt;4)-beta-D-xylosidic linkages in xylans.. It participates in glycan degradation; xylan degradation. Its activity is regulated as follows. N-bromosuccinimide completely inhibits the catalytic activity. Its function is as follows. Endo-1,4-beta-xylanase involved in the hydrolysis of xylan, a major structural heterogeneous polysaccharide found in plant biomass representing the second most abundant polysaccharide in the biosphere, after cellulose. The protein is Endo-1,4-beta-xylanase B (xynB) of Talaromyces purpureogenus (Soft rot fungus).